Here is a 277-residue protein sequence, read N- to C-terminus: Caspase-3 (277 aa).

Residue Met1 is modified to N-acetylmethionine. 2 consecutive propeptides follow at residues 1–9 (MENNETSVD) and 10–28 (AKSI…KSMD). The residue at position 11 (Lys11) is an N6-acetyllysine. The residue at position 26 (Ser26) is a Phosphoserine. Residues His121 and Cys163 contribute to the active site. Residue Cys163 is modified to S-nitrosocysteine; in inhibited form.

The protein belongs to the peptidase C14A family. Heterotetramer that consists of two anti-parallel arranged heterodimers, each one formed by a 17 kDa (p17) and a 12 kDa (p12) subunit. Interacts with BIRC6/bruce. Post-translationally, cleavage by granzyme B, caspase-6, caspase-8 and caspase-10 generates the two active subunits. Additional processing of the propeptides is likely due to the autocatalytic activity of the activated protease. Active heterodimers between the small subunit of caspase-7 protease and the large subunit of caspase-3 also occur and vice versa. S-nitrosylated on its catalytic site cysteine in unstimulated cell lines and denitrosylated upon activation of the Fas apoptotic pathway, associated with an increase in intracellular caspase activity. Fas therefore activates caspase-3 not only by inducing the cleavage of the caspase zymogen to its active subunits, but also by stimulating the denitrosylation of its active site thiol. In terms of processing, ubiquitinated by BIRC6; this activity is inhibited by DIABLO/SMAC.

The protein localises to the cytoplasm. The enzyme catalyses Strict requirement for an Asp residue at positions P1 and P4. It has a preferred cleavage sequence of Asp-Xaa-Xaa-Asp-|- with a hydrophobic amino-acid residue at P2 and a hydrophilic amino-acid residue at P3, although Val or Ala are also accepted at this position.. Inhibited by BIRC6; following inhibition of BIRC6-caspase binding by DIABLO/SMAC, BIRC6 is subjected to caspase cleavage, leading to an increase in active caspases. Its function is as follows. Involved in the activation cascade of caspases responsible for apoptosis execution. At the onset of apoptosis, it proteolytically cleaves poly(ADP-ribose) polymerase PARP1 at a '216-Asp-|-Gly-217' bond. Cleaves and activates sterol regulatory element binding proteins (SREBPs) between the basic helix-loop-helix leucine zipper domain and the membrane attachment domain. Cleaves and activates caspase-6, -7 and -9 (CASP6, CASP7 and CASP9, respectively). Cleaves and inactivates interleukin-18 (IL18). Triggers cell adhesion in sympathetic neurons through RET cleavage. Cleaves IL-1 beta between an Asp and an Ala, releasing the mature cytokine which is involved in a variety of inflammatory processes. Cleaves and inhibits serine/threonine-protein kinase AKT1 in response to oxidative stress. Acts as an inhibitor of type I interferon production during virus-induced apoptosis by mediating cleavage of antiviral proteins CGAS, IRF3 and MAVS, thereby preventing cytokine overproduction. Also involved in pyroptosis by mediating cleavage and activation of gasdermin-E (GSDME). Cleaves XRCC4 and phospholipid scramblase proteins XKR4, XKR8 and XKR9, leading to promote phosphatidylserine exposure on apoptotic cell surface. Cleaves BIRC6 following inhibition of BIRC6-caspase binding by DIABLO/SMAC. The protein is Caspase-3 (CASP3) of Oryctolagus cuniculus (Rabbit).